A 256-amino-acid polypeptide reads, in one-letter code: uncharacterized protein (256 aa).

NADP(+) is bound by residues Ile18, Ser37, Lys46, Asp66, Tyr164, Lys168, Val197, and Thr199. The Proton donor role is filled by Tyr164. The active-site Lowers pKa of active site Tyr is Lys168.

The protein belongs to the short-chain dehydrogenases/reductases (SDR) family.

The protein resides in the cytoplasm. This is an uncharacterized protein from Saccharomyces cerevisiae (strain ATCC 204508 / S288c) (Baker's yeast).